Consider the following 788-residue polypeptide: Multifunctional tryptophan biosynthesis protein (788 aa).

The Glutamine amidotransferase type-1 domain occupies 12 to 207; the sequence is DILMIDNFDS…MKLKGGTWEE (196 aa). 63 to 65 serves as a coordination point for L-glutamine; it reads GPG. C91 serves as the catalytic Nucleophile; for GATase activity. 141-142 contributes to the L-glutamine binding site; sequence SL. Catalysis depends on for GATase activity residues H181 and E183. An indole-3-glycerol phosphate synthase region spans residues 238-503; that stretch reads ILEKICAQRQ…DTRAFIRQLL (266 aa). The N-(5'-phosphoribosyl)anthranilate isomerase stretch occupies residues 520–788; that stretch reads LSRSCGIRTE…RAFVKAAKKL (269 aa).

The catalysed reaction is N-(5-phospho-beta-D-ribosyl)anthranilate = 1-(2-carboxyphenylamino)-1-deoxy-D-ribulose 5-phosphate. It carries out the reaction 1-(2-carboxyphenylamino)-1-deoxy-D-ribulose 5-phosphate + H(+) = (1S,2R)-1-C-(indol-3-yl)glycerol 3-phosphate + CO2 + H2O. It catalyses the reaction chorismate + L-glutamine = anthranilate + pyruvate + L-glutamate + H(+). The protein operates within amino-acid biosynthesis; L-tryptophan biosynthesis; L-tryptophan from chorismate: step 1/5. It functions in the pathway amino-acid biosynthesis; L-tryptophan biosynthesis; L-tryptophan from chorismate: step 3/5. Its pathway is amino-acid biosynthesis; L-tryptophan biosynthesis; L-tryptophan from chorismate: step 4/5. Trifunctional enzyme bearing the Gln amidotransferase (GATase) domain of anthranilate synthase, indole-glycerolphosphate synthase, and phosphoribosylanthranilate isomerase activities. This is Multifunctional tryptophan biosynthesis protein (TRPC) from Phanerodontia chrysosporium (White-rot fungus).